A 118-amino-acid chain; its full sequence is IgW heavy chain V region W26 (118 aa).

The region spanning 1-109 (NIVLTQPESA…PQWGYWGSGT (109 aa)) is the Ig-like domain. C22 and C93 form a disulfide bridge.

Expressed mainly in lymphoid tissues including spleen, epigonal organ and circulating lymphocytes.

The protein is IgW heavy chain V region W26 of Heterodontus francisci (Horn shark).